A 317-amino-acid polypeptide reads, in one-letter code: tRNA(Ile)-lysidine synthase (317 aa).

ATP is bound at residue 30–35 (SGGSDS).

This sequence belongs to the tRNA(Ile)-lysidine synthase family.

It localises to the cytoplasm. The enzyme catalyses cytidine(34) in tRNA(Ile2) + L-lysine + ATP = lysidine(34) in tRNA(Ile2) + AMP + diphosphate + H(+). Functionally, ligates lysine onto the cytidine present at position 34 of the AUA codon-specific tRNA(Ile) that contains the anticodon CAU, in an ATP-dependent manner. Cytidine is converted to lysidine, thus changing the amino acid specificity of the tRNA from methionine to isoleucine. The chain is tRNA(Ile)-lysidine synthase from Chlamydia caviae (strain ATCC VR-813 / DSM 19441 / 03DC25 / GPIC) (Chlamydophila caviae).